The chain runs to 168 residues: Photosystem I assembly protein Ycf3 (168 aa).

TPR repeat units follow at residues Ala-35–Pro-68, Ser-72–Leu-105, and Gly-120–Asn-153.

The protein belongs to the Ycf3 family.

It localises to the plastid. Its subcellular location is the chloroplast thylakoid membrane. Its function is as follows. Essential for the assembly of the photosystem I (PSI) complex. May act as a chaperone-like factor to guide the assembly of the PSI subunits. The protein is Photosystem I assembly protein Ycf3 of Ranunculus macranthus (Large buttercup).